The primary structure comprises 624 residues: tRNA uridine 5-carboxymethylaminomethyl modification enzyme MnmG (624 aa).

Position 14–19 (14–19 (GAGHAG)) interacts with FAD. 273–287 (GTRYCPSFEDKVVRF) is an NAD(+) binding site.

It belongs to the MnmG family. In terms of assembly, homodimer. Heterotetramer of two MnmE and two MnmG subunits. FAD serves as cofactor.

It localises to the cytoplasm. NAD-binding protein involved in the addition of a carboxymethylaminomethyl (cmnm) group at the wobble position (U34) of certain tRNAs, forming tRNA-cmnm(5)s(2)U34. This chain is tRNA uridine 5-carboxymethylaminomethyl modification enzyme MnmG, found in Syntrophomonas wolfei subsp. wolfei (strain DSM 2245B / Goettingen).